We begin with the raw amino-acid sequence, 308 residues long: Acetylglutamate kinase (308 aa).

Residues 67–68 (GG), R89, and N193 contribute to the substrate site.

It belongs to the acetylglutamate kinase family. ArgB subfamily.

It localises to the cytoplasm. It catalyses the reaction N-acetyl-L-glutamate + ATP = N-acetyl-L-glutamyl 5-phosphate + ADP. The protein operates within amino-acid biosynthesis; L-arginine biosynthesis; N(2)-acetyl-L-ornithine from L-glutamate: step 2/4. Its function is as follows. Catalyzes the ATP-dependent phosphorylation of N-acetyl-L-glutamate. The polypeptide is Acetylglutamate kinase (Nitratidesulfovibrio vulgaris (strain DP4) (Desulfovibrio vulgaris)).